A 206-amino-acid polypeptide reads, in one-letter code: Large ribosomal subunit protein uL4 (206 aa).

The segment at 51–96 (LTRAEVKHSTKKPFRQKGTGNARAGMTSTPNRRGGGRAFPNKPDEN) is disordered.

The protein belongs to the universal ribosomal protein uL4 family. Part of the 50S ribosomal subunit.

In terms of biological role, one of the primary rRNA binding proteins, this protein initially binds near the 5'-end of the 23S rRNA. It is important during the early stages of 50S assembly. It makes multiple contacts with different domains of the 23S rRNA in the assembled 50S subunit and ribosome. Its function is as follows. Forms part of the polypeptide exit tunnel. The sequence is that of Large ribosomal subunit protein uL4 from Chromobacterium violaceum (strain ATCC 12472 / DSM 30191 / JCM 1249 / CCUG 213 / NBRC 12614 / NCIMB 9131 / NCTC 9757 / MK).